The following is a 163-amino-acid chain: RNA pyrophosphohydrolase (163 aa).

A Nudix hydrolase domain is found at 6 to 149 (GYRLNVGIVI…KRDVYRQVMK (144 aa)). A Nudix box motif is present at residues 38 to 59 (GGIHLTESPEEAMYRELFEELG).

This sequence belongs to the Nudix hydrolase family. RppH subfamily. A divalent metal cation is required as a cofactor.

Its function is as follows. Accelerates the degradation of transcripts by removing pyrophosphate from the 5'-end of triphosphorylated RNA, leading to a more labile monophosphorylated state that can stimulate subsequent ribonuclease cleavage. The protein is RNA pyrophosphohydrolase of Hamiltonella defensa subsp. Acyrthosiphon pisum (strain 5AT).